Here is a 612-residue protein sequence, read N- to C-terminus: Alpha-glycerophosphate oxidase (612 aa).

21 to 49 lines the FAD pocket; that stretch reads DLLIIGGGITGAGVALQAAASGLDTGLIE. Residues 399–408 are compositionally biased toward basic and acidic residues; it reads ETSTSEKELD. The disordered stretch occupies residues 399-418; that stretch reads ETSTSEKELDPSAVSRGSSF.

Belongs to the FAD-dependent glycerol-3-phosphate dehydrogenase family. FAD is required as a cofactor.

The protein localises to the cytoplasm. The enzyme catalyses sn-glycerol 3-phosphate + O2 = dihydroxyacetone phosphate + H2O2. The polypeptide is Alpha-glycerophosphate oxidase (glpO) (Streptococcus pyogenes serotype M6 (strain ATCC BAA-946 / MGAS10394)).